The primary structure comprises 360 residues: Nicotinate-nucleotide--dimethylbenzimidazole phosphoribosyltransferase (360 aa).

Glu327 (proton acceptor) is an active-site residue.

This sequence belongs to the CobT family.

The enzyme catalyses 5,6-dimethylbenzimidazole + nicotinate beta-D-ribonucleotide = alpha-ribazole 5'-phosphate + nicotinate + H(+). It participates in nucleoside biosynthesis; alpha-ribazole biosynthesis; alpha-ribazole from 5,6-dimethylbenzimidazole: step 1/2. Catalyzes the synthesis of alpha-ribazole-5'-phosphate from nicotinate mononucleotide (NAMN) and 5,6-dimethylbenzimidazole (DMB). This is Nicotinate-nucleotide--dimethylbenzimidazole phosphoribosyltransferase from Shewanella baltica (strain OS223).